Consider the following 20-residue polypeptide: Styelin-A (20 aa).

Hemocytes and pharyngeal tissues.

The protein resides in the secreted. In terms of biological role, bactericidal against several Gram-positive and Gram-negative bacteria. This chain is Styelin-A, found in Styela clava (Sea squirt).